Consider the following 138-residue polypeptide: Histone H2B.3 (138 aa).

2 stretches are compositionally biased toward basic and acidic residues: residues 1 to 18 (MAPKAEKKPVAEKAEKTT) and 26 to 38 (EKRPPASKEGGDK). The disordered stretch occupies residues 1–46 (MAPKAEKKPVAEKAEKTTAAKKTKAEKRPPASKEGGDKKGKKKSKK). N6-acetyllysine occurs at positions 7 and 27. Residue K134 forms a Glycyl lysine isopeptide (Lys-Gly) (interchain with G-Cter in ubiquitin) linkage.

The protein belongs to the histone H2B family. As to quaternary structure, the nucleosome is a histone octamer containing two molecules each of H2A, H2B, H3 and H4 assembled in one H3-H4 heterotetramer and two H2A-H2B heterodimers. The octamer wraps approximately 147 bp of DNA. Post-translationally, can be acetylated to form H2BK6ac and H2BK33ac. Monoubiquitinated to form H2BK143ub1; may give a specific tag for epigenetic transcriptional activation.

The protein localises to the nucleus. It is found in the chromosome. Core component of nucleosome. Nucleosomes wrap and compact DNA into chromatin, limiting DNA accessibility to the cellular machineries which require DNA as a template. Histones thereby play a central role in transcription regulation, DNA repair, DNA replication and chromosomal stability. DNA accessibility is regulated via a complex set of post-translational modifications of histones, also called histone code, and nucleosome remodeling. This is Histone H2B.3 from Triticum aestivum (Wheat).